Reading from the N-terminus, the 532-residue chain is Muscarinic acetylcholine receptor M5 (532 aa).

Residues 1–29 (MEGDSYGNATTINGTPVNHQPLERHRLWE) are Extracellular-facing. Asparagine 8 carries an N-linked (GlcNAc...) asparagine glycan. The chain crosses the membrane as a helical span at residues 30-53 (VITIAAVTAVVSLITIVGNVLVMI). The Cytoplasmic segment spans residues 54–66 (SFKVNSQLKTVNN). The chain crosses the membrane as a helical span at residues 67 to 87 (YYLLSLACADLIIGIFSMNLY). Residues 88-104 (TTYILMGRWALGSLACD) are Extracellular-facing. Residues 105 to 126 (LWLALDYVASNASVMNLLVISF) traverse the membrane as a helical segment. Topologically, residues 127–146 (DRYFSITRPLTYRAKRTPKR) are cytoplasmic. The helical transmembrane segment at 147 to 169 (AGIMIGLAWLISFILWAPAILCW) threads the bilayer. Residues 170–191 (QYLVGKRTVPPDECQIQFLSEP) are Extracellular-facing. A helical membrane pass occupies residues 192–214 (TITFGTAIAAFYIPVSVMTILYC). Over 215 to 443 (RIYRETEKRT…LVKERKAAQT (229 aa)) the chain is Cytoplasmic. The segment at 263–294 (QRERNQASRSSSHRSTSITGKPSQATGPSTNW) is disordered. The segment covering 270–279 (SRSSSHRSTS) has biased composition (low complexity). Over residues 280–294 (ITGKPSQATGPSTNW) the composition is skewed to polar residues. A helical membrane pass occupies residues 444–464 (LSAILLAFIITWTPYNIMVLV). Topologically, residues 465–478 (STFCDKCVPVALWH) are extracellular. A helical membrane pass occupies residues 479-498 (LGYWLCYVNSTVNPICYALC). At 499 to 532 (NRTFRKTFKMLLLCQWKKKKVEEKLYWQGNSKLP) the chain is on the cytoplasmic side. Phosphothreonine is present on residues threonine 501 and threonine 505.

This sequence belongs to the G-protein coupled receptor 1 family. Muscarinic acetylcholine receptor subfamily. CHRM5 sub-subfamily.

The protein resides in the cell membrane. It localises to the postsynaptic cell membrane. In terms of biological role, the muscarinic acetylcholine receptor mediates various cellular responses, including inhibition of adenylate cyclase, breakdown of phosphoinositides and modulation of potassium channels through the action of G proteins. Primary transducing effect is Pi turnover. The protein is Muscarinic acetylcholine receptor M5 (CHRM5) of Saimiri boliviensis boliviensis (Bolivian squirrel monkey).